The sequence spans 435 residues: Methylenetetrahydrofolate--tRNA-(uracil-5-)-methyltransferase TrmFO (435 aa).

9–14 (GAGLAG) is an FAD binding site.

The protein belongs to the MnmG family. TrmFO subfamily. It depends on FAD as a cofactor.

It is found in the cytoplasm. The catalysed reaction is uridine(54) in tRNA + (6R)-5,10-methylene-5,6,7,8-tetrahydrofolate + NADH + H(+) = 5-methyluridine(54) in tRNA + (6S)-5,6,7,8-tetrahydrofolate + NAD(+). It carries out the reaction uridine(54) in tRNA + (6R)-5,10-methylene-5,6,7,8-tetrahydrofolate + NADPH + H(+) = 5-methyluridine(54) in tRNA + (6S)-5,6,7,8-tetrahydrofolate + NADP(+). In terms of biological role, catalyzes the folate-dependent formation of 5-methyl-uridine at position 54 (M-5-U54) in all tRNAs. The protein is Methylenetetrahydrofolate--tRNA-(uracil-5-)-methyltransferase TrmFO of Staphylococcus epidermidis (strain ATCC 35984 / DSM 28319 / BCRC 17069 / CCUG 31568 / BM 3577 / RP62A).